The following is a 479-amino-acid chain: Cysteine protease effector 1 (479 aa).

This is Cysteine protease effector 1 from Escherichia coli O1:K1:H7 (strain ATCC 11775 / DSM 30083 / JCM 1649 / NBRC 102203 / NCTC 9001 / U5/41).